We begin with the raw amino-acid sequence, 363 residues long: 3-methyl-D-ornithine--L-lysine ligase (363 aa).

Position 10 (Lys-10) interacts with ATP. Residue 11–12 (LQ) coordinates L-lysine. Residues Asp-31, 49–50 (DV), and 72–73 (EN) contribute to the ATP site. L-lysine is bound at residue Glu-72. Positions 85–269 (EEFSCPVLFD…LIELLFRAFG (185 aa)) constitute an ATP-grasp domain. ADP-binding positions include Lys-104, Lys-131, Ser-138, and 160 to 163 (EEYV). D-ornithine is bound by residues 169 to 171 (SLE) and Asp-225. The Mg(2+) site is built by Glu-227, Glu-239, and Asp-241. Residue Glu-239 coordinates ADP. D-ornithine is bound by residues 243–248 (RFPSQT) and Glu-302. L-lysine is bound by residues Ser-246 and Glu-302.

This sequence belongs to the PylC family. Mg(2+) is required as a cofactor.

The enzyme catalyses (3R)-3-methyl-D-ornithine + L-lysine + ATP = (3R)-3-methyl-D-ornithyl-N(6)-L-lysine + ADP + phosphate + H(+). The protein operates within amino-acid biosynthesis; L-pyrrolysine biosynthesis. In terms of biological role, is required for the biosynthesis of pyrrolysine. Catalyzes the ATP-dependent ligation between (3R)-3-methyl-D-ornithine and L-lysine, leading to (3R)-3-methyl-D-ornithyl-N6-L-lysine. This is 3-methyl-D-ornithine--L-lysine ligase from Methanosarcina acetivorans (strain ATCC 35395 / DSM 2834 / JCM 12185 / C2A).